Consider the following 220-residue polypeptide: Large ribosomal subunit protein uL16 (220 aa).

This sequence belongs to the universal ribosomal protein uL16 family. As to quaternary structure, component of the small ribosomal subunit. Mature ribosomes consist of a small (40S) and a large (60S) subunit. The 40S subunit contains about 33 different proteins and 1 molecule of RNA (18S). The 60S subunit contains about 49 different proteins and 3 molecules of RNA (25S, 5.8S and 5S).

This chain is Large ribosomal subunit protein uL16 (RPL10), found in Vitis riparia (Frost grape).